Consider the following 98-residue polypeptide: Exopolysaccharide production repressor protein (98 aa).

2 consecutive transmembrane segments (helical) span residues 6-26 (VFLS…YLNG) and 35-55 (TLIC…FLVW). Residues 73–98 (AEAANDEKQPGKVSLRRLNRPHHLNS) form a disordered region. The segment covering 86–98 (SLRRLNRPHHLNS) has biased composition (basic residues).

Its subcellular location is the cell membrane. It functions in the pathway glycan metabolism; exopolysaccharide biosynthesis. In terms of biological role, inhibition of exopolysaccharide synthesis (EPS) and nodulation ability (NOD). In Rhizobium meliloti (strain 1021) (Ensifer meliloti), this protein is Exopolysaccharide production repressor protein (exoX).